Consider the following 231-residue polypeptide: MLKRFFITGTDTSVGKTVVSRALLQALASQGKTVAGYKPVAKGSKETPEGLRNKDALVLQSVSTIELPYEAVNPIALSEEESSVAHSCPINYTLISNGLANLTEKVDHVVVEGTGGWRSLMNDLRPLSEWVVQEQLPVLMVVGIQEGCINHALLTAQAIANDGLPLIGWVANRINPGLAHYAEIIDVLGKKLPAPLIGELPYLPRAEQRELGQYIRLAMLRSVLAVDRVTV.

13–18 lines the ATP pocket; it reads SVGKTV. Residue threonine 17 participates in Mg(2+) binding. Lysine 38 is a catalytic residue. ATP is bound by residues aspartate 55, 112 to 115, 172 to 173, 201 to 203, and glutamine 208; these read EGTG, NR, and PYL. Mg(2+) is bound by residues aspartate 55 and glutamate 112.

Belongs to the dethiobiotin synthetase family. In terms of assembly, homodimer. The cofactor is Mg(2+).

It localises to the cytoplasm. The catalysed reaction is (7R,8S)-7,8-diammoniononanoate + CO2 + ATP = (4R,5S)-dethiobiotin + ADP + phosphate + 3 H(+). It participates in cofactor biosynthesis; biotin biosynthesis; biotin from 7,8-diaminononanoate: step 1/2. Catalyzes a mechanistically unusual reaction, the ATP-dependent insertion of CO2 between the N7 and N8 nitrogen atoms of 7,8-diaminopelargonic acid (DAPA, also called 7,8-diammoniononanoate) to form a ureido ring. The chain is ATP-dependent dethiobiotin synthetase BioD 2 from Escherichia coli O157:H7.